The following is a 454-amino-acid chain: Response regulator PleD (454 aa).

2 consecutive Response regulatory domains span residues Arg-4–Thr-120 and Arg-155–Ile-269. Asp-9, Asp-10, Asp-53, and Met-55 together coordinate Mg(2+). Asp-53 bears the 4-aspartylphosphate mark. The GGDEF domain occupies Asp-319–Ala-454. Asn-335 and Asp-344 together coordinate substrate. Glu-370 serves as the catalytic Proton acceptor.

In terms of assembly, homodimer. Inactive monomer in solution. Phosphorylated by PleC and DivJ. Phosphorylation stimulates cyclase activity.

It localises to the cytoplasm. It catalyses the reaction 2 GTP = 3',3'-c-di-GMP + 2 diphosphate. Its pathway is purine metabolism; 3',5'-cyclic di-GMP biosynthesis. With respect to regulation, allosterically inhibited by the product c-di-GMP. Its function is as follows. Response regulator that is part of a signal transduction pathway controlling cell differentiation in the swarmer-to-stalked cell transition. In terms of biological role, catalyzes the condensation of two GTP molecules to the cyclic dinucleotide di-GMP (c-di-GMP), which acts as a secondary messenger. This is Response regulator PleD (pleD) from Caulobacter vibrioides (strain ATCC 19089 / CIP 103742 / CB 15) (Caulobacter crescentus).